A 73-amino-acid chain; its full sequence is Protein BP4C (73 aa).

In terms of tissue distribution, pollen specific.

This Brassica napus (Rape) protein is Protein BP4C (BP4C).